The chain runs to 548 residues: CTL-like protein DDB_G0288717 (548 aa).

Residues Met-1–His-44 form a disordered region. N-linked (GlcNAc...) asparagine glycosylation is present at Asn-25. Residues Ile-52–Ala-72 form a helical membrane-spanning segment. An N-linked (GlcNAc...) asparagine glycan is attached at Asn-97. A run of 4 helical transmembrane segments spans residues Asp-125 to Leu-145, Phe-151 to Phe-171, Met-184 to Leu-204, and Pro-226 to Trp-246. Asn-273 is a glycosylation site (N-linked (GlcNAc...) asparagine). 2 consecutive transmembrane segments (helical) span residues Asn-290 to Phe-310 and Phe-350 to Leu-370. Asn-377 carries an N-linked (GlcNAc...) asparagine glycan. The next 3 helical transmembrane spans lie at Lys-381–Val-401, Phe-442–Phe-462, and Ile-479–Ile-499. Asn-544 carries N-linked (GlcNAc...) asparagine glycosylation.

It belongs to the CTL (choline transporter-like) family.

It localises to the membrane. This chain is CTL-like protein DDB_G0288717, found in Dictyostelium discoideum (Social amoeba).